A 126-amino-acid polypeptide reads, in one-letter code: Glycine cleavage system H protein (126 aa).

Positions 22–104 constitute a Lipoyl-binding domain; sequence TVTIGITEYA…YEKAWMVKVK (83 aa). Lys-63 carries the post-translational modification N6-lipoyllysine.

It belongs to the GcvH family. As to quaternary structure, the glycine cleavage system is composed of four proteins: P, T, L and H. (R)-lipoate serves as cofactor.

Functionally, the glycine cleavage system catalyzes the degradation of glycine. The H protein shuttles the methylamine group of glycine from the P protein to the T protein. In terms of biological role, is also involved in protein lipoylation via its role as an octanoyl/lipoyl carrier protein intermediate. The polypeptide is Glycine cleavage system H protein (Staphylococcus carnosus (strain TM300)).